A 459-amino-acid chain; its full sequence is ATP-dependent RNA helicase me31b (459 aa).

Residues 1 to 267 (MMTEKLNSGH…EINLMEELTL (267 aa)) form a recA-like domain 1 region. Phosphoserine occurs at positions 8 and 29. The short motif at 58–86 (NEFEEFCLKRELLMGIFEKGWERPSPIQE) is the Q motif element. Residues 89–259 (IPIALSGKDV…EKHLREPYEI (171 aa)) form the Helicase ATP-binding domain. ATP is bound at residue 102 to 109 (AKNGTGKT). The short motif at 207–210 (DEAD) is the DEAD box element. The tract at residues 264 to 431 (ELTLKGVTQY…PKVIDPALYV (168 aa)) is gyf binding. One can recognise a Helicase C-terminal domain in the interval 269 to 429 (GVTQYYAFVQ…PIPKVIDPAL (161 aa)). A recA-like domain 2 region spans residues 432–459 (ANVGASVGDTCNNSDLNNSANEEGNVSK). Position 450 is a phosphoserine (serine 450).

Belongs to the DEAD box helicase family. DDX6/DHH1 subfamily. Conserved component of different types of multiprotein ribonucleoprotein complexes (RNPs) that form distinct germ granules (P-body, nuage, sponge body or polar granules) and P-body-like neuronal RNPs. Consequently it interacts with a wide variety of proteins, some of which appear to be common interactive partners in almost all RNPs types i.e. cup and tral, whereas other interactions are specific to a germ granule/RNP. Core functional components in me31B-containing RNPs include RNA regulatory proteins (such as translational repressor, RNA-decapping and exonuclease proteins), RNA localization proteins and additional proteins depending on the biological context of the RNPs. In the P-body RNPs, interacts with at least the translation repressor proteins tral, cup and Edc3, and the mRNA localization factor yps. Interaction with tral or Edc3 is required for translation repression and possibly RNA decapping; binding to tral and Edc3 is mutually exclusive. In the nuage and germ plasm polar granule RNPs, interacts with at least tral, cup, and additional proteins required for assembly and function of the germ granules such as tud, vas and aub. Interacts (when dimethylated on Arg residues) with tud; interaction is RNA-independent. Component of the osk RNP complex, which is composed of at least me31B, exu, yps, aret/bruno, cup, and the mRNA of osk. Component of the nanos RNP complex, which is composed of at least smg, cup, tral, me31B, the CCR4-NOT complex members Rga/NOT2 and Caf1-55, and the mRNA of nanos (nos). Interacts with tral and piRNA pathway components papi and AGO3; promotes interaction between nuage RNPs and the piRNA-mediated transposon silencing. Forms a RNP containing at least me31B, eIF4E1, cup, tral and pAbp; this interaction is required for the translational silencing of maternal mRNAs during the maternal-to-zygotic transition. In the sponge body, forms a RNP containing at least me31B, exu, yps and the mRNA of osk; interactions with exu and yps are RNA dependent. Component of a neuronal RNP, at least composed of me31B, tral and Fmr1. Component of the Atx2-Not1 repressor complex, composed of at least me31B, Atx2, tyf and pAbp. Interacts (via the C-terminus) with Atx2, tyf, pAbp and Lsm12a. Interacts (via RecA-like domain 2) with 4EHP-GYF2 complex member Gyf (via the me31B binding motif). Interacts with 4E-T, Edc3 and Patr-1. Symmetrically dimethylated on arginine residues. As to expression, ubiquitously expressed throughout the brain (at protein level). Expressed in the olfactory system including the antennal lobes, projection neurons, local interneurons, mushroom-body Kenyon cells and glial cells (at protein level).

The protein localises to the cytoplasm. It is found in the cytoplasmic ribonucleoprotein granule. The protein resides in the P-body. Its subcellular location is the endoplasmic reticulum. It localises to the cell projection. The protein localises to the dendrite. The catalysed reaction is ATP + H2O = ADP + phosphate + H(+). Functionally, ATP-dependent RNA helicase which is a core component of a variety of ribonucleoprotein complexes (RNPs) that play critical roles in translational repression and mRNA decapping during embryogenesis, oogenesis, neurogenesis and neurotransmission. Recruits core components and translational repressors to some RNP complexes, and mediates RNP aggregation into processing granules such as P-bodies. As part of a RNP complex containing tral, eIF4E1, cup, and pAbp, involved in RNP-mediated translational repression of maternal mRNAs during oogenesis and embryogenesis. As part of a RNP complex containing tral and the RNA localization factors exu and yps, mediates translational silencing of mRNAs such as osk/oskar and bcd/bicoid during their transport to the oocyte in order to prevent their translation until they reach their positional destinations. In neurons and possibly imaginal disks, involved in miRNA-mediated translational repression, possibly in association with components of the piRNA transposon silencing pathway. Involved in RNA localization and protein trafficking in the oocyte. As part of an ER-associated RNP containing tral, cup and yps, required for tral-dependent ER exit site formation and consequently efficient trafficking of proteins such as grk and yl through the secretory pathway. Component of neuron RNPs that mediate transport and translation of neuronal RNAs, including translation repression of synaptic transcripts in preparation for their dendritic targeting. As part of the Atx2-Not1 repressor complex promotes Not1-dependent post-transcriptional gene silencing in adult circadian pacemaker neurons in order to sustain high-amplitude circadian rhythms and Pdf cycling in a per-independent manner. Promotes the interaction between Atx2 and Not1 within the Atx2-Not1 RNP complex. Recruited to the 4EHP-GYF2 complex by Gyf, where it plays a role in 4EHP-GYF2 mediated translational repression and mRNA decay. This chain is ATP-dependent RNA helicase me31b (me31B), found in Drosophila melanogaster (Fruit fly).